A 387-amino-acid polypeptide reads, in one-letter code: MEVNRKDNSFLITGGGGYFGFRLACALLKTSSKVVLFDVSPPIQDLPEGLIFMRADIRDYAQVEKAVRGSHCVFHIASYGMSGREQLNRKLIEEVNVKGTENILRACVAHSVPRLIYTSTFNVVFGGQEIKNGDESLPYLPLHLHPDHYSRTKSIAEMQVLKANNLALSNSTGVLRTCALRPAGIYGPGEQRHLPRIVSYIENGIFRFVYGDPDSLVEFVHVDNLVSAHLLAADALTEKQQCRAAGQAYFISDGRPVNNFEFFRPLVEGLGYSFPTLRLPISMIYFFAFLTEMVHFVVGRIYNFQPLLTRTEVYKTGVTHYFSMRKAREELGYEPKLYDLEDVVQWFQARGHGKKRSRSSIRKLILDVFVVVAFVAVLLSCLPVVGQ.

The Proton acceptor role is filled by tyrosine 149. Lysine 153 contributes to the NAD(+) binding site. Transmembrane regions (helical) follow at residues 279–299 and 365–385; these read LPIS…FVVG and ILDV…LPVV.

This sequence belongs to the 3-beta-HSD family.

Its subcellular location is the membrane. This Danio rerio (Zebrafish) protein is Short-chain dehydrogenase/reductase family 42E member 1 (sdr42e1).